The chain runs to 184 residues: Ribosome-recycling factor (184 aa).

Belongs to the RRF family.

The protein resides in the cytoplasm. Responsible for the release of ribosomes from messenger RNA at the termination of protein biosynthesis. May increase the efficiency of translation by recycling ribosomes from one round of translation to another. This chain is Ribosome-recycling factor, found in Borreliella afzelii (strain PKo) (Borrelia afzelii).